The chain runs to 766 residues: 5-methyltetrahydropteroyltriglutamate--homocysteine methyltransferase 1 (766 aa).

K18 and N116 together coordinate 5-methyltetrahydropteroyltri-L-glutamate. L-homocysteine-binding positions include 438–440 (IGS) and E491. L-methionine contacts are provided by residues 438–440 (IGS) and E491. 5-methyltetrahydropteroyltri-L-glutamate contacts are provided by residues D496, Y519, 522 to 523 (RC), and W568. D606 is an L-homocysteine binding site. D606 contributes to the L-methionine binding site. Zn(2+) contacts are provided by H648, C650, H659, and E672. H702 serves as the catalytic Proton donor. C734 contributes to the Zn(2+) binding site.

This sequence belongs to the vitamin-B12 independent methionine synthase family. It depends on Zn(2+) as a cofactor.

It is found in the cytoplasm. It localises to the cytosol. The catalysed reaction is 5-methyltetrahydropteroyltri-L-glutamate + L-homocysteine = tetrahydropteroyltri-L-glutamate + L-methionine. Its pathway is amino-acid biosynthesis; L-methionine biosynthesis via de novo pathway; L-methionine from L-homocysteine (MetE route): step 1/1. In terms of biological role, catalyzes the transfer of a methyl group from 5-methyltetrahydrofolate to homocysteine resulting in methionine formation. The polypeptide is 5-methyltetrahydropteroyltriglutamate--homocysteine methyltransferase 1 (Oryza sativa subsp. japonica (Rice)).